A 201-amino-acid polypeptide reads, in one-letter code: Small ribosomal subunit protein uS4 (201 aa).

One can recognise an S4 RNA-binding domain in the interval 91 to 151 (SRLDNVVYRA…EKSRSMLWFE (61 aa)).

Belongs to the universal ribosomal protein uS4 family. Part of the 30S ribosomal subunit. Contacts protein S5. The interaction surface between S4 and S5 is involved in control of translational fidelity.

Its function is as follows. One of the primary rRNA binding proteins, it binds directly to 16S rRNA where it nucleates assembly of the body of the 30S subunit. With S5 and S12 plays an important role in translational accuracy. The polypeptide is Small ribosomal subunit protein uS4 (Corynebacterium jeikeium (strain K411)).